We begin with the raw amino-acid sequence, 264 residues long: Glutamate racemase (264 aa).

Residues 10-11 (DS) and 42-43 (YG) each bind substrate. Cysteine 73 serves as the catalytic Proton donor/acceptor. 74–75 (NT) contacts substrate. Cysteine 183 (proton donor/acceptor) is an active-site residue. 184-185 (TH) contacts substrate.

It belongs to the aspartate/glutamate racemases family.

The enzyme catalyses L-glutamate = D-glutamate. The protein operates within cell wall biogenesis; peptidoglycan biosynthesis. Provides the (R)-glutamate required for cell wall biosynthesis. In Streptococcus mutans serotype c (strain ATCC 700610 / UA159), this protein is Glutamate racemase.